Consider the following 334-residue polypeptide: 4-hydroxyproline 2-epimerase (334 aa).

The active-site Proton acceptor is the Cys-90. Substrate contacts are provided by residues 91-92, His-223, and Asp-249; that span reads GH. The active-site Proton donor is the Cys-253. 254-255 lines the substrate pocket; it reads GT.

The protein belongs to the proline racemase family. As to quaternary structure, homodimer.

It carries out the reaction trans-4-hydroxy-L-proline = cis-4-hydroxy-D-proline. In terms of biological role, catalyzes the epimerization of trans-4-hydroxy-L-proline (t4LHyp) to cis-4-hydroxy-D-proline (c4DHyp). Is likely involved in a degradation pathway that converts t4LHyp to alpha-ketoglutarate, which would allow P.denitrificans to grow on t4LHyp as a sole carbon source. Also seems to be involved in an alternative catabolic pathway that degrades trans-4-hydroxy-L-proline betaine (tHyp-B) to alpha-ketoglutarate; this pathway would permit the utilization of tHyp-B as a sole carbon and nitrogen source. This is 4-hydroxyproline 2-epimerase (hypF) from Paracoccus denitrificans (strain Pd 1222).